The following is a 278-amino-acid chain: Putative phosphatase MG265 (278 aa).

Catalysis depends on aspartate 9, which acts as the Nucleophile. Aspartate 9 serves as a coordination point for Mg(2+). Residue leucine 10 participates in phosphate binding. Position 11 (aspartate 11) interacts with Mg(2+). Residues 43-44 (SG) and lysine 204 each bind phosphate. Aspartate 227 contributes to the Mg(2+) binding site. Position 230 (asparagine 230) interacts with phosphate.

This sequence belongs to the HAD-like hydrolase superfamily. Cof family. Mg(2+) is required as a cofactor.

The sequence is that of Putative phosphatase MG265 from Mycoplasma genitalium (strain ATCC 33530 / DSM 19775 / NCTC 10195 / G37) (Mycoplasmoides genitalium).